A 389-amino-acid polypeptide reads, in one-letter code: Monomeric sarcosine oxidase (389 aa).

8 to 38 (DVIVVGAGSMGMAAGYYLSKQGVKTLLVDSF) is an FAD binding site. Residue Cys318 is modified to S-8alpha-FAD cysteine.

The protein belongs to the MSOX/MTOX family. MSOX subfamily. Monomer. It depends on FAD as a cofactor.

It localises to the cytoplasm. It catalyses the reaction sarcosine + O2 + H2O = formaldehyde + glycine + H2O2. Functionally, catalyzes the oxidative demethylation of sarcosine. In Arthrobacter sp. (strain TE1826), this protein is Monomeric sarcosine oxidase (soxA).